The following is a 363-amino-acid chain: Phosphate acyltransferase (363 aa).

The interval A326–G363 is disordered. The span at E337 to P354 shows a compositional bias: low complexity.

Belongs to the PlsX family. In terms of assembly, homodimer. Probably interacts with PlsY.

The protein resides in the cytoplasm. The catalysed reaction is a fatty acyl-[ACP] + phosphate = an acyl phosphate + holo-[ACP]. The protein operates within lipid metabolism; phospholipid metabolism. In terms of biological role, catalyzes the reversible formation of acyl-phosphate (acyl-PO(4)) from acyl-[acyl-carrier-protein] (acyl-ACP). This enzyme utilizes acyl-ACP as fatty acyl donor, but not acyl-CoA. This Synechococcus sp. (strain JA-3-3Ab) (Cyanobacteria bacterium Yellowstone A-Prime) protein is Phosphate acyltransferase.